We begin with the raw amino-acid sequence, 455 residues long: T-box protein VegT-A (455 aa).

Disordered stretches follow at residues 21 to 40, 229 to 262, and 295 to 346; these read SNCASDVKSSPDMDSVSSQD, REQERSHKRDDVLKILQQSPSKRQKRKKWEDSPE, and ANQG…EPSS. The T-box DNA-binding region spans 57 to 230; sequence LWSQFHQEGT…HNPFAKGFRE (174 aa). Residues 229 to 241 are compositionally biased toward basic and acidic residues; the sequence is REQERSHKRDDVL. Residues 308–324 are compositionally biased toward polar residues; sequence GANQEQQVPTSSSNFYN.

As to quaternary structure, forms a repression complex on the promoters of the nodal/nr1 and siamois genes with the maternal factors tcf7l1/tcf3 and pouf5.1/oct-25. Interacts (via C-terminus) with tcf7l1/tcf3 (via N-terminus). Also interacts with the other POU-domain transcription factors pou5f1.2/oct-91 and pou5f1.3/oct-60. Uniformly distributed in stage I oocytes but becomes localized to the vegetal hemisphere by stage II and remains so thereafter throughout oogenesis and the early embryonic cleavage stages. Zygotic expression parallels blastopore formation and shifts from dorsal expression in the marginal zone of late blastula and early gastrula stages to a ventral/lateral expression at the posterior end of later stage embryos. Expression is excluded from the notochord. In tailbud and tadpole stages, expressed exclusively in a subset of posterior Rohon-Beard neurons.

It is found in the nucleus. Transcription factor required for both mesoderm and endoderm formation in the embryo; signaling determinants and concentration levels may determine which germ layer is formed. Acts together with beta-catenin to activate genes that are responsible for mesoderm induction including wnt-8, eomes t/bra, siamois, mix1 and sox17. Directly binds to promoter DNA. Patterns the mesoderm along the dorsoventral and posterior axis. Activates siamois gene transcription when alone or in combination with beta-catenin, but inhibits siamois transcription in combination with pou5f1.1/oct-25. The polypeptide is T-box protein VegT-A (vegt-a) (Xenopus laevis (African clawed frog)).